Here is a 128-residue protein sequence, read N- to C-terminus: Large ribosomal subunit protein bL17 (128 aa).

This sequence belongs to the bacterial ribosomal protein bL17 family. As to quaternary structure, part of the 50S ribosomal subunit. Contacts protein L32.

The sequence is that of Large ribosomal subunit protein bL17 from Edwardsiella ictaluri (strain 93-146).